Reading from the N-terminus, the 204-residue chain is Large ribosomal subunit protein uL4 (204 aa).

The tract at residues 44–76 is disordered; it reads KRQGTQSAKTRSEVRGGGIKPWRQKGTGRARQG.

It belongs to the universal ribosomal protein uL4 family. As to quaternary structure, part of the 50S ribosomal subunit.

Its function is as follows. One of the primary rRNA binding proteins, this protein initially binds near the 5'-end of the 23S rRNA. It is important during the early stages of 50S assembly. It makes multiple contacts with different domains of the 23S rRNA in the assembled 50S subunit and ribosome. In terms of biological role, forms part of the polypeptide exit tunnel. The chain is Large ribosomal subunit protein uL4 from Clostridium perfringens (strain ATCC 13124 / DSM 756 / JCM 1290 / NCIMB 6125 / NCTC 8237 / Type A).